We begin with the raw amino-acid sequence, 455 residues long: Epoxide hydrolase 1 (455 aa).

A helical; Signal-anchor for type III membrane protein membrane pass occupies residues 1–21; that stretch reads MLLELLLASVLGFVIYWFVSG. Residues 22–455 lie on the Cytoplasmic side of the membrane; that stretch reads DKEESLPLED…CKFVGLVERQ (434 aa). The active-site Nucleophile is the aspartate 226. Arginine 295 is subject to Dimethylated arginine. Catalysis depends on tyrosine 374, which acts as the Proton donor. The active-site Proton acceptor is histidine 431.

This sequence belongs to the peptidase S33 family.

It is found in the microsome membrane. It localises to the endoplasmic reticulum membrane. It carries out the reaction cis-stilbene oxide + H2O = (1R,2R)-hydrobenzoin. The catalysed reaction is 1-(4-methoxyphenyl)-N-methyl-N-[(3-methyloxetan-3-yl)methyl]methanamine + H2O = 2-{[(4-methoxybenzyl)(methyl)amino]methyl}-2-methylpropane-1,3-diol. The enzyme catalyses 8,9-epoxy-(5Z,11Z,14Z)-eicosatrienoate + H2O = 8,9-dihydroxy-(5Z,11Z,14Z)-eicosatrienoate. It catalyses the reaction 11,12-epoxy-(5Z,8Z,14Z)-eicosatrienoate + H2O = 11,12-dihydroxy-(5Z,8Z,14Z)-eicosatrienoate. It carries out the reaction 2-(5Z,8Z,11Z,14Z-eicosatetraenoyl)-glycerol + H2O = glycerol + (5Z,8Z,11Z,14Z)-eicosatetraenoate + H(+). Inhibited by 10-hydroxystearamide and methoxy-arachidonyl fluorophosphate. In terms of biological role, biotransformation enzyme that catalyzes the hydrolysis of arene and aliphatic epoxides to less reactive and more water soluble dihydrodiols by the trans addition of water. May play a role in the metabolism of endogenous lipids such as epoxide-containing fatty acids. Metabolizes the abundant endocannabinoid 2-arachidonoylglycerol (2-AG) to free arachidonic acid (AA) and glycerol. Binds 20(S)-hydroxycholesterol (20(S)-OHC). This Oryctolagus cuniculus (Rabbit) protein is Epoxide hydrolase 1 (EPHX1).